A 267-amino-acid chain; its full sequence is 26S proteasome non-ATPase regulatory subunit 8 homolog A (267 aa).

The residue at position 1 (Met-1) is an N-acetylmethionine. The region spanning 79–251 (DAFERDFFQL…APCKEIPSLQ (173 aa)) is the PCI domain.

It belongs to the proteasome subunit S14 family. As to quaternary structure, component of the 19S regulatory particle (RP/PA700) lid subcomplex of the 26S proteasome. The 26S proteasome is composed of a core protease (CP), known as the 20S proteasome, capped at one or both ends by the 19S regulatory particle (RP/PA700). The RP/PA700 complex is composed of at least 17 different subunits in two subcomplexes, the base and the lid, which form the portions proximal and distal to the 20S proteolytic core, respectively. Interacts with PUB22 and PUB23. Binds to the translation initiation factors TIF3E1. Interacts with UCH1 and UCH2. In terms of processing, ubiquitinated by PUB22 and PUB23. In terms of tissue distribution, ubiquitous with highest expression in flowers.

Its function is as follows. Acts as a regulatory subunit of the 26S proteasome which is involved in the ATP-dependent degradation of ubiquitinated proteins. May help to control the degradation of one or more factors that repress cytokinin signaling. Plays an important role for balancing cell expansion with cell proliferation rates during shoot development. This Arabidopsis thaliana (Mouse-ear cress) protein is 26S proteasome non-ATPase regulatory subunit 8 homolog A.